We begin with the raw amino-acid sequence, 416 residues long: Hepatic and glial cell adhesion molecule (416 aa).

An N-terminal signal peptide occupies residues 1-33 (MKRERGALSRASRALRLAPFVYLLLIQTDPLEG). In terms of domain architecture, Ig-like V-type spans 34 to 142 (VNITSPVRLI…GEKTINLTVD (109 aa)). The Extracellular portion of the chain corresponds to 34–240 (VNITSPVRLI…VKITVYRRSS (207 aa)). Residues Asn35, Asn138, Asn167, and Asn189 are each glycosylated (N-linked (GlcNAc...) asparagine). One can recognise an Ig-like C2-type domain in the interval 148 to 234 (PQVLVASTTV…QGRSLPVKIT (87 aa)). Cys168 and Cys217 are oxidised to a cystine. The helical transmembrane segment at 241 to 261 (LYIILSTGGIFLLVTLVTVCA) threads the bilayer. Residues 262–416 (CWKPSKRKQK…DEAGPVEISA (155 aa)) are Cytoplasmic-facing. Residues 273–416 (LEKQNSLEYM…DEAGPVEISA (144 aa)) form a disordered region. Ser278 carries the phosphoserine modification. Residues 285 to 306 (NDDRLKPEADTLPRSGEQERKN) are compositionally biased toward basic and acidic residues. Phosphoserine occurs at positions 350 and 377. Over residues 383–398 (SSPGRSRSASRTLRTA) the composition is skewed to low complexity.

As to quaternary structure, homodimer. Dimer formation occurs predominantly through cis interactions on the cell surface. Part of a complex containing MLC1, TRPV4, AQP4 and ATP1B1. Interacts with CLCN2. In terms of processing, N-glycosylated.

Its subcellular location is the cytoplasm. The protein localises to the cell membrane. In terms of biological role, involved in regulating cell motility and cell-matrix interactions. May inhibit cell growth through suppression of cell proliferation. In glia, associates and targets CLCN2 at astrocytic processes and myelinated fiber tracts where it may regulate transcellular chloride flux involved in neuron excitability. This Homo sapiens (Human) protein is Hepatic and glial cell adhesion molecule.